The following is a 302-amino-acid chain: Homoserine O-acetyltransferase 1 (302 aa).

Cysteine 142 acts as the Acyl-thioester intermediate in catalysis. Residues lysine 163 and serine 192 each contribute to the substrate site. Residue histidine 235 is the Proton acceptor of the active site. Residue glutamate 237 is part of the active site. Arginine 249 contacts substrate.

Belongs to the MetA family.

It is found in the cytoplasm. It catalyses the reaction L-homoserine + acetyl-CoA = O-acetyl-L-homoserine + CoA. It functions in the pathway amino-acid biosynthesis; L-methionine biosynthesis via de novo pathway; O-acetyl-L-homoserine from L-homoserine: step 1/1. In terms of biological role, transfers an acetyl group from acetyl-CoA to L-homoserine, forming acetyl-L-homoserine. The chain is Homoserine O-acetyltransferase 1 from Ilyobacter polytropus (strain ATCC 51220 / DSM 2926 / LMG 16218 / CuHBu1).